The primary structure comprises 777 residues: Double zinc ribbon and ankyrin repeat-containing protein 1 (777 aa).

Positions 161–176 are enriched in basic and acidic residues; sequence QVGERTDPKTLKDLRF. Residues 161-202 form a disordered region; sequence QVGERTDPKTLKDLRFSESPLEIPAHSGGSGSRPPTRQSQSP. Polar residues predominate over residues 193-202; sequence RPPTRQSQSP. A Phosphoserine modification is found at Ser-201. DZANK-type zinc fingers lie at residues 230-289 and 358-406; these read CAHC…CVVC and CSRC…GSCG. ANK repeat units follow at residues 442–473 and 477–506; these read NIPLPRSDAGTKRDIGTQTVGLFYPSGKLLAK and EIASQKQRQEKMSDHKPLLTAISPGRGYWR.

Interacts with NINL. Associates with DYNC1H1 and multiple dynein intermediate and light chains as well as actin-binding proteins.

It is found in the cytoplasm. Its subcellular location is the cytoskeleton. The protein resides in the microtubule organizing center. The protein localises to the centrosome. It localises to the cilium basal body. Involved in vesicle transport in photoreceptor cells. This is Double zinc ribbon and ankyrin repeat-containing protein 1 (DZANK1) from Macaca fascicularis (Crab-eating macaque).